The following is a 352-amino-acid chain: Cell division protein ZipA (352 aa).

The Periplasmic portion of the chain corresponds to 1 to 6; sequence MKDLQL. Residues 7-27 traverse the membrane as a helical segment; it reads VLFVLGAIAIIAVLVHGFWSI. At 28–352 the chain is on the cytoplasmic side; sequence RKQQPKSMKQ…KDYLRRLNAA (325 aa). 2 disordered regions span residues 78-120 and 138-160; these read KPVL…HVEP and PAPT…TSTA. Residues 83-105 are compositionally biased toward polar residues; sequence TNLSQKPHSGTTKLTDTPLQDSL. Basic and acidic residues predominate over residues 111-120; sequence HKTEPEHVEP. Positions 141–160 are enriched in polar residues; sequence TASTSMNTPKKIFNPSTSTA.

This sequence belongs to the ZipA family. Interacts with FtsZ via their C-terminal domains.

It localises to the cell inner membrane. In terms of biological role, essential cell division protein that stabilizes the FtsZ protofilaments by cross-linking them and that serves as a cytoplasmic membrane anchor for the Z ring. Also required for the recruitment to the septal ring of downstream cell division proteins. The sequence is that of Cell division protein ZipA from Shewanella frigidimarina (strain NCIMB 400).